Reading from the N-terminus, the 183-residue chain is Ribosome-recycling factor (183 aa).

This sequence belongs to the RRF family.

It localises to the cytoplasm. In terms of biological role, responsible for the release of ribosomes from messenger RNA at the termination of protein biosynthesis. May increase the efficiency of translation by recycling ribosomes from one round of translation to another. This Mycoplasma mobile (strain ATCC 43663 / 163K / NCTC 11711) (Mesomycoplasma mobile) protein is Ribosome-recycling factor.